The following is a 112-amino-acid chain: uncharacterized protein (112 aa).

2 consecutive transmembrane segments (helical) span residues 33–53 (IIGI…MIIF) and 69–89 (MNNI…HITV).

Its subcellular location is the membrane. This is an uncharacterized protein from Saccharomyces cerevisiae (strain ATCC 204508 / S288c) (Baker's yeast).